Here is a 206-residue protein sequence, read N- to C-terminus: Ras-related protein RABG3c (206 aa).

Position 15–22 (15–22) interacts with GTP; it reads GDSGVGKT. Residues 37 to 45 carry the Effector region motif; the sequence is YKATIGADF. GTP contacts are provided by residues 63 to 67, 125 to 128, and 158 to 159; these read DTAGQ, NKTD, and SA. Residues C204 and C206 are each lipidated (S-geranylgeranyl cysteine). C206 carries the post-translational modification Cysteine methyl ester.

The protein belongs to the small GTPase superfamily. Rab family.

The protein localises to the cell membrane. Intracellular vesicle trafficking and protein transport. The chain is Ras-related protein RABG3c (RABG3C) from Arabidopsis thaliana (Mouse-ear cress).